Here is a 710-residue protein sequence, read N- to C-terminus: Putative transmembrane protein ORF710 (710 aa).

Positions 1–33 (MKLDRKKKRLLLKTIFSIVILILPLTFLHPTNS) are cleaved as a signal peptide. A run of 3 helical transmembrane segments spans residues 41 to 61 (VPIQIIYNYNVSGGVIYTAPL), 76 to 95 (YGTLLYSYLFSTNPAFVVWY), and 689 to 709 (VAIVSMAYGTKIWIGVFIFAI).

The protein localises to the host membrane. This is Putative transmembrane protein ORF710 from Acidianus convivator (ATV).